Here is a 199-residue protein sequence, read N- to C-terminus: Interleukin-11 (199 aa).

A signal peptide spans 1 to 21 (MNCVCRLVLVVLSLWPDRVVA). The important for interaction with IL11RA and for the stimulation of cell proliferation stretch occupies residues 182–190 (HLTLDWAVR).

It belongs to the IL-6 superfamily. Interacts with either IL11RA1 or IL11RA2 to associate with IL6ST, giving rise to a multimeric signaling complex.

The protein resides in the secreted. Cytokine that stimulates the proliferation of hematopoietic stem cells and megakaryocyte progenitor cells and induces megakaryocyte maturation resulting in increased platelet production. Also promotes the proliferation of hepatocytes in response to liver damage. Binding to its receptor formed by IL6ST and either IL11RA1 or IL11RA2 activates a signaling cascade that promotes cell proliferation, also in the context of various cancers. Signaling leads to the activation of intracellular protein kinases and the phosphorylation of STAT3. The interaction with the membrane-bound IL11RA and IL6ST stimulates 'classic signaling', whereas the binding of IL11 and soluble IL11RA to IL6ST stimulates 'trans-signaling'. The sequence is that of Interleukin-11 from Mus musculus (Mouse).